The chain runs to 701 residues: Glycine--tRNA ligase beta subunit (701 aa).

Belongs to the class-II aminoacyl-tRNA synthetase family. In terms of assembly, tetramer of two alpha and two beta subunits.

It is found in the cytoplasm. The enzyme catalyses tRNA(Gly) + glycine + ATP = glycyl-tRNA(Gly) + AMP + diphosphate. The polypeptide is Glycine--tRNA ligase beta subunit (Bradyrhizobium sp. (strain BTAi1 / ATCC BAA-1182)).